Consider the following 146-residue polypeptide: MVLPIIIGLGVTMVALSVKSGLNAWTVYKTLSPLTIAKLNNIRIENPTAGYRDALKFKSSLIDEELKNRLNQYQGGFAPRMTEPEALLILDISAREINHLDEKLLKKKHRKAMVRNHPDRGGSPYMAAKINEAKEVLERSVLLRKR.

The J domain occupies 85–146; it reads EALLILDISA…LERSVLLRKR (62 aa).

In terms of assembly, interacts with PAM16/TIM16 and is recruited by the PAM complex.

The protein localises to the mitochondrion inner membrane. Its function is as follows. Plays a role in mitochondrial biogenesis and protein folding. Participates in the translocation of transit peptide-containing proteins from the inner membrane into the mitochondrial matrix in an ATP-dependent manner, probably by stimulating activity of mtHSP70 (SSC1). In Saccharomyces cerevisiae (strain ATCC 204508 / S288c) (Baker's yeast), this protein is Mitochondrial DnaJ homolog 2 (MDJ2).